Here is a 745-residue protein sequence, read N- to C-terminus: MFRAAAAGPYDEAINKATDENLTSEDWGAIMEVCDRVATDANGAKEAVNSMIKRLAHRNANVQLYTLEVANALSQNCGKNMHRELSSRAFTDALLKLANDRNTHTQVKAKILERMKEWSDMFKSDSDLGIMYDAYYRLKQSNPTLQPPSAPQKNVLTDADRQKEEEELQMALQLSLQEEERKKRPAGASGATASSSSGGAAAGPSNAGGAVASGEGTNSTAGQAEATPQPVPSSTTAATVSRVRALYDFVPSEPGELEFKKGDVIAVLKSVYKDWWSGSLKGKTGIFPLNYVEKLADPTPEELQREAQMEAEVFAEIKNVEKLLTLLSAGNTGPREEDNEEISKLYHQTLAIRPKLIKLIEKYSQKKDDFTQLNEKFIKARRDYEALLESSMSHPPGPTYHQYAMRPPMTNSYGSGGYGAPPPQQQQEPPRFYNPAPAQDAPQYPATSPSPNPNHFIRPAGTPAPYYMGGAEGPGQLQHQQQPPYPQQQPQPAYGAPSRPQDQQRNPSGPSPMAPAPLNTTSSPPPGNQYTPYQAPGASGANNRTNSYSSTNGGAPQELSTSAYDSPIAQHSTNPLSNPSYNAPSAPSYSQGRPGAPTDDPYGPTSPGAGSSNNVGSAPPPPSGPAPSGPAPSAPSAPSAPSAPGAPNSYTQGAYHSQNPYAAAAAAAAAAASRTHVPGVYDGAGSEVSSTAPQPPAALQPGGGAQPQYKAYVPPGAPSAPGSGQEGPSAPGQNDGLADYYRSAY.

Residues 17 to 146 (ATDENLTSED…RLKQSNPTLQ (130 aa)) form the VHS domain. A disordered region spans residues 142–237 (NPTLQPPSAP…PQPVPSSTTA (96 aa)). The region spanning 163–182 (KEEEELQMALQLSLQEEERK) is the UIM domain. The segment covering 186-214 (AGASGATASSSSGGAAAGPSNAGGAVASG) has biased composition (low complexity). Positions 238 to 297 (ATVSRVRALYDFVPSEPGELEFKKGDVIAVLKSVYKDWWSGSLKGKTGIFPLNYVEKLAD) constitute an SH3 domain. The interval 390 to 745 (SSMSHPPGPT…GLADYYRSAY (356 aa)) is disordered. A compositionally biased stretch (low complexity) spans 425-446 (QQQEPPRFYNPAPAQDAPQYPA). 2 stretches are compositionally biased toward polar residues: residues 518–532 (LNTTSSPPPGNQYTP) and 540–576 (GANNRTNSYSSTNGGAPQELSTSAYDSPIAQHSTNPL). Positions 577–590 (SNPSYNAPSAPSYS) are enriched in low complexity. Over residues 618 to 635 (APPPPSGPAPSGPAPSAP) the composition is skewed to pro residues. Low complexity predominate over residues 636–647 (SAPSAPSAPGAP). The segment covering 648–660 (NSYTQGAYHSQNP) has biased composition (polar residues). Composition is skewed to low complexity over residues 662 to 672 (AAAAAAAAAAA) and 719 to 733 (SAPGSGQEGPSAPGQ).

The protein belongs to the STAM family. In terms of assembly, component of the ESCRT-0 complex composed of hse1 and vps27.

The protein resides in the endosome membrane. In terms of biological role, component of the ESCRT-0 complex which is the sorting receptor for ubiquitinated cargo proteins at the multivesicular body (MVB). The protein is Class E vacuolar protein-sorting machinery protein hse1 (hse1) of Neurospora crassa (strain ATCC 24698 / 74-OR23-1A / CBS 708.71 / DSM 1257 / FGSC 987).